A 1415-amino-acid chain; its full sequence is DNA-directed RNA polymerase subunit beta' (1415 aa).

Zn(2+) is bound by residues Cys69, Cys71, Cys84, and Cys87. Mg(2+) is bound by residues Asp461, Asp463, and Asp465. Zn(2+) is bound by residues Cys805, Cys879, Cys886, and Cys889.

This sequence belongs to the RNA polymerase beta' chain family. The RNAP catalytic core consists of 2 alpha, 1 beta, 1 beta' and 1 omega subunit. When a sigma factor is associated with the core the holoenzyme is formed, which can initiate transcription. Mg(2+) serves as cofactor. Requires Zn(2+) as cofactor.

The enzyme catalyses RNA(n) + a ribonucleoside 5'-triphosphate = RNA(n+1) + diphosphate. Functionally, DNA-dependent RNA polymerase catalyzes the transcription of DNA into RNA using the four ribonucleoside triphosphates as substrates. This is DNA-directed RNA polymerase subunit beta' from Anaplasma marginale (strain Florida).